A 165-amino-acid polypeptide reads, in one-letter code: Large ribosomal subunit protein uL5 (165 aa).

It belongs to the universal ribosomal protein uL5 family. In terms of assembly, part of the 50S ribosomal subunit; contacts the 5S rRNA and probably tRNA. Forms a bridge to the 30S subunit in the 70S ribosome.

Functionally, this is one of the proteins that bind and probably mediate the attachment of the 5S RNA into the large ribosomal subunit, where it forms part of the central protuberance. In the 70S ribosome it contacts protein S13 of the 30S subunit (bridge B1b), connecting the 2 subunits; this bridge is implicated in subunit movement. May contact the P site tRNA; the 5S rRNA and some of its associated proteins might help stabilize positioning of ribosome-bound tRNAs. The sequence is that of Large ribosomal subunit protein uL5 from Methanosarcina acetivorans (strain ATCC 35395 / DSM 2834 / JCM 12185 / C2A).